Here is a 398-residue protein sequence, read N- to C-terminus: tRNA-specific 2-thiouridylase MnmA (398 aa).

ATP contacts are provided by residues 18-25 (AMSGGVDS) and Leu-44. Cys-112 (nucleophile) is an active-site residue. Cys-112 and Cys-213 form a disulfide bridge. Gly-136 is a binding site for ATP. An interaction with tRNA region spans residues 163–165 (RDQ). Residue Cys-213 is the Cysteine persulfide intermediate of the active site.

This sequence belongs to the MnmA/TRMU family.

It is found in the cytoplasm. It carries out the reaction S-sulfanyl-L-cysteinyl-[protein] + uridine(34) in tRNA + AH2 + ATP = 2-thiouridine(34) in tRNA + L-cysteinyl-[protein] + A + AMP + diphosphate + H(+). In terms of biological role, catalyzes the 2-thiolation of uridine at the wobble position (U34) of tRNA, leading to the formation of s(2)U34. The protein is tRNA-specific 2-thiouridylase MnmA of Agrobacterium fabrum (strain C58 / ATCC 33970) (Agrobacterium tumefaciens (strain C58)).